A 293-amino-acid polypeptide reads, in one-letter code: Protease HtpX homolog (293 aa).

The next 2 helical transmembrane spans lie at 4 to 24 (IFLF…TMRI) and 38 to 58 (LTGL…ISLL). His146 serves as a coordination point for Zn(2+). Residue Glu147 is part of the active site. His150 provides a ligand contact to Zn(2+). 2 helical membrane-spanning segments follow: residues 161–181 (LIQG…GYFV) and 198–218 (ATVI…VAWF). Glu223 contacts Zn(2+).

Belongs to the peptidase M48B family. Zn(2+) serves as cofactor.

Its subcellular location is the cell inner membrane. The protein is Protease HtpX homolog of Bordetella parapertussis (strain 12822 / ATCC BAA-587 / NCTC 13253).